Here is a 526-residue protein sequence, read N- to C-terminus: MAPKRRAPPASQPADGGKKAKGGQEEEEDAWSSALNALKTAPREKPPATIDGQCPLSAGPDAKVYEDYDCTLNQTNISANNNKFYIIQLIEHGGTYSTWNRWGRVGEVGQSKLLPFTSLEAAKKDFEKKFWEKTKNRWAARDNFVAQPGKYTLIEVQPGAGQEVALRVDGAGDEKVSKRRVLPCALDETTQKLVALIFSSDMFRHAMQAMNIDVKKMPLGKLSKQQIARGFEALEELEAALGEQPRSMSRLEELSSRFYTIVPHNFGRARPPPIDSPELLRAKKDMLLVLADIEVAQSLQAQKVEEEEVVAHPLDRDYALLCCQLTLLEDTSQEYEMILNYVAQTGGQVYVLNVWRVAREGEDKLFQAHDHLEHRRLLWHGTNVAVVAAILKNGLRIMPHSGGRVGKGIYFASENSKSACYVGCTSKRVGLMFLTEVALGKPYCITRDEPTLQQPPNGYDSVQACGRTEPDPAQDVEVTLDGKKVLVCQGKPIPMPAYKDSSFFQSEYLIYQESQCRIRYLVQLHF.

The disordered stretch occupies residues 1–55; sequence MAPKRRAPPASQPADGGKKAKGGQEEEEDAWSSALNALKTAPREKPPATIDGQCP. Positions 61–151 constitute a WGR domain; sequence DAKVYEDYDC…DNFVAQPGKY (91 aa). In terms of domain architecture, PARP alpha-helical spans 183–301; sequence PCALDETTQK…DIEVAQSLQA (119 aa). Positions 312-526 constitute a PARP catalytic domain; that stretch reads HPLDRDYALL…RIRYLVQLHF (215 aa).

It belongs to the ARTD/PARP family.

It is found in the nucleus. It localises to the chromosome. Its subcellular location is the cytoplasm. The protein resides in the cytoskeleton. The protein localises to the microtubule organizing center. It is found in the centrosome. It localises to the centriole. The catalysed reaction is L-aspartyl-[protein] + NAD(+) = 4-O-(ADP-D-ribosyl)-L-aspartyl-[protein] + nicotinamide. It catalyses the reaction L-glutamyl-[protein] + NAD(+) = 5-O-(ADP-D-ribosyl)-L-glutamyl-[protein] + nicotinamide. The enzyme catalyses L-lysyl-[protein] + NAD(+) = N(6)-(ADP-D-ribosyl)-L-lysyl-[protein] + nicotinamide + H(+). Functionally, mono-ADP-ribosyltransferase that mediates mono-ADP-ribosylation of target proteins and plays a key role in the response to DNA damage. Mediates mono-ADP-ribosylation of glutamate, aspartate or lysine residues on target proteins. In contrast to PARP1 and PARP2, it is not able to mediate poly-ADP-ribosylation. Involved in DNA repair by mediating mono-ADP-ribosylation of a limited number of acceptor proteins involved in chromatin architecture and in DNA metabolism, such as histone H2B, XRCC5 and XRCC6. ADP-ribosylation follows DNA damage and appears as an obligatory step in a detection/signaling pathway leading to the reparation of DNA strand breaks. Involved in single-strand break repair by catalyzing mono-ADP-ribosylation of histone H2B on 'Glu-2' (H2BE2ADPr) of nucleosomes containing nicked DNA. Cooperates with the XRCC5-XRCC6 (Ku80-Ku70) heterodimer to limit end-resection thereby promoting accurate NHEJ. Associates with a number of DNA repair factors and is involved in the response to exogenous and endogenous DNA strand breaks. Together with APLF, promotes the retention of the LIG4-XRCC4 complex on chromatin and accelerate DNA ligation during non-homologous end-joining (NHEJ). In addition to proteins, also able to ADP-ribosylate DNA: mediates DNA mono-ADP-ribosylation of DNA strand break termini via covalent addition of a single ADP-ribose moiety to a 5'- or 3'-terminal phosphate residues in DNA containing multiple strand breaks. The protein is Protein mono-ADP-ribosyltransferase PARP3 of Gallus gallus (Chicken).